The sequence spans 506 residues: Ent-kaurenoic acid oxidase (506 aa).

The chain crosses the membrane as a helical span at residues 11-31 (AWAAGDLWVLAAAVVAGVVLV). Cys451 contacts heme.

This sequence belongs to the cytochrome P450 family. Heme serves as cofactor. In terms of tissue distribution, expressed in roots and panicles. Expressed at low levels in vegetative shoot apices, leaf sheaths, leaf blades and stems.

The protein localises to the endoplasmic reticulum membrane. It carries out the reaction ent-kaur-16-en-19-oate + 3 reduced [NADPH--hemoprotein reductase] + 3 O2 = gibberellin A12 + 3 oxidized [NADPH--hemoprotein reductase] + 4 H2O + 4 H(+). It catalyses the reaction ent-kaur-16-en-19-oate + reduced [NADPH--hemoprotein reductase] + O2 = ent-7alpha-hydroxykaur-16-en-19-oate + oxidized [NADPH--hemoprotein reductase] + H2O + H(+). The catalysed reaction is ent-7alpha-hydroxykaur-16-en-19-oate + reduced [NADPH--hemoprotein reductase] + O2 = gibberellin A12 aldehyde + oxidized [NADPH--hemoprotein reductase] + 2 H2O + H(+). The enzyme catalyses gibberellin A12 aldehyde + reduced [NADPH--hemoprotein reductase] + O2 = gibberellin A12 + oxidized [NADPH--hemoprotein reductase] + H2O + 2 H(+). Its pathway is plant hormone biosynthesis; gibberellin biosynthesis. In terms of biological role, involved in gibberellin (GA) biosynthesis. Catalyzes three successive oxidations of ent-kaurenoic acid giving gibberellin 12 (GA12), a key step in GAs biosynthesis. GAs, which are involved many processes, including stem elongation, play a central role in plant development. Required for pollen germination and elongation. This Oryza sativa subsp. japonica (Rice) protein is Ent-kaurenoic acid oxidase.